We begin with the raw amino-acid sequence, 728 residues long: Magnetosome formation protease MamE (728 aa).

The Cytoplasmic segment spans residues 1–21 (MAMFNGDVEDGGRGDASCGKD). A helical membrane pass occupies residues 22 to 42 (LKRYLMLMGVVALVVLFGAFI). Residues 43 to 728 (YRQSSGGLRL…RNGQEFWIVL (686 aa)) lie on the Lumenal side of the membrane. Active-site charge relay system residues include H188, D221, and S297. An MCR (magnetochrome) 1 motif is present at residues 375-398 (IFAGTRAPHTDGRQNMDCTTCHDL). Residues C392, C395, H396, C438, C441, and H442 each contribute to the heme site. The MCR 2 signature appears at 421-444 (IPMGAVSPHTDGRQNMNCANCHQM). 2 PDZ domains span residues 471–573 (AINI…LRDG) and 622–721 (PAVM…NRNG).

In the N-terminal section; belongs to the peptidase S1C family. Might interact with MamB via PDZ1. Requires heme as cofactor. Post-translationally, subject to autocatalytic cleavage; cleavage also requires MamO.

The protein resides in the magnetosome membrane. Autoproteolysis is stimulated by exogenous substrates or peptides that bind to its PDZ domains; may be stimulated by an environmental cue in vivo. Protease activity is tightly regulated; increasing its activity decreases substrate levels and disturbs biomineralization. Acts at 2 distinct steps of magnetosome formation; required for correct localization of proteins to the magnetosome while the protease activity is required for maturation of small magnetite crystals into larger, functional ones. The 2 functions are separable by mutation. Probably cleaves at least itself, MamO and MamP; cleavage requires the putative transport domain of MamO. Involved in localization of some proteins (at least MamA, MamC, MamF, MamI and MamJ) to the magnetosome. This is Magnetosome formation protease MamE (mamE) from Paramagnetospirillum magneticum (strain ATCC 700264 / AMB-1) (Magnetospirillum magneticum).